The primary structure comprises 351 residues: Translation initiation factor eIF2B subunit beta (351 aa).

The protein belongs to the eIF-2B alpha/beta/delta subunits family. As to quaternary structure, component of the translation initiation factor 2B (eIF2B) complex which is a heterodecamer of two sets of five different subunits: alpha, beta, gamma, delta and epsilon. Subunits alpha, beta and delta comprise a regulatory subcomplex and subunits epsilon and gamma comprise a catalytic subcomplex. Within the complex, the hexameric regulatory complex resides at the center, with the two heterodimeric catalytic subcomplexes bound on opposite sides.

It is found in the cytoplasm. Its subcellular location is the cytosol. Its activity is regulated as follows. Activated by the chemical integrated stress response (ISR) inhibitor ISRIB which stimulates guanine nucleotide exchange factor activity for both phosphorylated and unphosphorylated eIF2. Functionally, acts as a component of the translation initiation factor 2B (eIF2B) complex, which catalyzes the exchange of GDP for GTP on eukaryotic initiation factor 2 (eIF2) gamma subunit. Its guanine nucleotide exchange factor activity is repressed when bound to eIF2 complex phosphorylated on the alpha subunit, thereby limiting the amount of methionyl-initiator methionine tRNA available to the ribosome and consequently global translation is repressed. This Homo sapiens (Human) protein is Translation initiation factor eIF2B subunit beta (EIF2B2).